The primary structure comprises 552 residues: L-ascorbate oxidase (552 aa).

Plastocyanin-like domains follow at residues 1–122 (SQIR…LIVD) and 134–300 (DGEI…NYLP). Cystine bridges form between C19–C201, C81–C538, and C180–C193. The Cu cation site is built by H60 and H62. Residue N92 is glycosylated (N-linked (GlcNAc...) asparagine). Residues H104 and H106 each contribute to the Cu cation site. N-linked (GlcNAc...) asparagine glycosylation is found at N325 and N440. The Plastocyanin-like 3 domain occupies 344-523 (NRRIFLLNTQ…HMGMGVVFAE (180 aa)). Residues H445, H448, H450, H506, C507, H508, H512, and M517 each coordinate Cu cation.

The protein belongs to the multicopper oxidase family. In terms of assembly, dimer. Cu cation is required as a cofactor.

It localises to the secreted. The catalysed reaction is 4 L-ascorbate + O2 = 4 monodehydro-L-ascorbate radical + 2 H2O. May be involved in a redox system involving ascorbic acid. This Cucurbita pepo var. melopepo (Zucchini) protein is L-ascorbate oxidase.